The following is a 2624-amino-acid chain: Highly reducing polyketide synthase ALT1 (2624 aa).

A Ketosynthase family 3 (KS3) domain is found at 28–449; that stretch reads VLPLAIVGMG…GSNAHCILES (422 aa). The active-site For beta-ketoacyl synthase activity is Cys-200. The tract at residues 289-308 is disordered; sequence VRGTSSNSDGKTPGMSMPSS. Catalysis depends on for beta-ketoacyl synthase activity residues His-335 and His-372. The segment covering 523-544 has biased composition (polar residues); the sequence is ESYSNHHTLTETTNPSNNTATN. Residues 523–545 form a disordered region; it reads ESYSNHHTLTETTNPSNNTATNG. The tract at residues 639 to 945 is malonyl-CoA:ACP transacylase (MAT) domain; the sequence is VFTGQGAQWA…GYTPAMIRGK (307 aa). Residues 1009–1140 are N-terminal hotdog fold; sequence HELLGSQTLE…GQVRPGRDAH (132 aa). The tract at residues 1009–1301 is dehydratase (DH) domain; that stretch reads HELLGSQTLE…LEGGKFSPIE (293 aa). The 298-residue stretch at 1009–1306 folds into the PKS/mFAS DH domain; the sequence is HELLGSQTLE…FSPIEVDDGI (298 aa). His-1041 acts as the Proton acceptor; for dehydratase activity in catalysis. The interval 1157-1306 is C-terminal hotdog fold; sequence QYPRPVDSLY…FSPIEVDDGI (150 aa). Asp-1217 functions as the Proton donor; for dehydratase activity in the catalytic mechanism. Residues 1493-1599 are methyltransferase (CMet) domain; the sequence is LEIGAGTGGA…RKLLAPEGYL (107 aa). The tract at residues 1895–2205 is enoyl reductase (ER) (ER) domain; sequence GLLQTLKWVD…KGTHLGKIVV (311 aa). The ketoreductase (KR) domain stretch occupies residues 2230–2509; it reads TYVLVGGLGG…DSDALRFFIT (280 aa). The Carrier domain maps to 2522–2600; it reads ASLDLVTRTI…GLAKLILDAL (79 aa). The residue at position 2559 (Ser-2559) is an O-(pantetheine 4'-phosphoryl)serine.

Its pathway is mycotoxin biosynthesis. In terms of biological role, highly reducing polyketide synthase; part of the gene cluster that mediates the biosynthesis of the host-selective toxins (HSTs) AAL-toxins, sphinganine-analog mycotoxins responsible for Alternaria stem canker on tomato by the tomato pathotype. The biosynthesis starts with the polyketide synthase ALT1-catalyzed C-16 carbon chain assembly from one starter acetyl-CoA unit with malonyl-CoA extender units. ALT1 also selectively transfers methyl groups at the first and the third cycle of chain elongation for AAL toxin. The C-16 polyketide chain is released from the enzyme by a nucleophilic attack of a carbanion, which is derived from R-carbon of glycin by decarboxylation, on the carbonyl carbon of polyketide acyl chain. This step is probably catalyzed by a pyridoxal 5'-phosphate-dependent aminoacyl transferase ALT4. The respective functions of the other enzymes encoded by the cluster have still to be elucidated. The sphingosine N-acyltransferase-like protein ALT7 seems not to act as a resistance/self-tolerance factor against the toxin in the toxin biosynthetic gene cluster, contrary to what is expected. This is Highly reducing polyketide synthase ALT1 from Alternaria alternata (Alternaria rot fungus).